The sequence spans 354 residues: MATAAASSLLKSSFAGSRLPAATRTTPASLVVATGPRGAGAGPICASMSMSSSNPPYDLTSFRFSPIKESIVSREMTRRYMTDMITYADTDVVIVGAGSAGLSCAYELSKDPAVSIAIVEQSVSPGGGAWLGGQLFSAMVVRKPAHLFLDELGVAYDEAEDYVVIKHAALFTSTVMSLLLARPNVKLFNAVAVEDLIVRGGRVGGVVTNWALVSMNHDTQSCMDPNVMEAKVVVSSCGHDGPFGATGVKRLQDIGMISAVPGMKALDMNTAEDEIVRLTREVVPGMIVTGMEVAEIDGAPRMGPTFGAMMISGQKAAHLALKALGRPNAVDGTMSPPLREELMIAYKDDEVVDA.

A chloroplast-targeting transit peptide spans 1 to 45; it reads MATAAASSLLKSSFAGSRLPAATRTTPASLVVATGPRGAGAGPIC. Substrate contacts are provided by residues Ala100, 120–121, Gly128, and Val193; that span reads EQ. Cys222 carries the 2,3-didehydroalanine (Cys) modification. Substrate is bound by residues Asp224, His239, Met291, and 301–303; that span reads RMG.

Belongs to the THI4 family. Homooctamer. The cofactor is Fe cation. During the catalytic reaction, a sulfide is transferred from Cys-222 to a reaction intermediate, generating a dehydroalanine residue. Highest expression in developing embryos and green leaves and a very low level expression seen in endosperm, roots, etiolated shoots and immature ears.

The protein resides in the plastid. The protein localises to the chloroplast. It carries out the reaction [ADP-thiazole synthase]-L-cysteine + glycine + NAD(+) = [ADP-thiazole synthase]-dehydroalanine + ADP-5-ethyl-4-methylthiazole-2-carboxylate + nicotinamide + 3 H2O + 2 H(+). Its function is as follows. Involved in biosynthesis of the thiamine precursor thiazole. Catalyzes the conversion of NAD and glycine to adenosine diphosphate 5-(2-hydroxyethyl)-4-methylthiazole-2-carboxylic acid (ADT), an adenylated thiazole intermediate. The reaction includes an iron-dependent sulfide transfer from a conserved cysteine residue of the protein to a thiazole intermediate. The enzyme can only undergo a single turnover, which suggests it is a suicide enzyme. May have additional roles in adaptation to various stress conditions and in DNA damage tolerance. This is Thiamine thiazole synthase 1, chloroplastic from Zea mays (Maize).